A 139-amino-acid chain; its full sequence is Non-structural protein 1 (139 aa).

The short motif at 136 to 139 (DLNS) is the DLNP; interaction with MAP1B element.

The protein belongs to the pneumovirus non-structural protein 1 family. As to quaternary structure, monomer. Homomultimer. Heteromultimer with NS2. Interacts with the matrix protein M. Interacts with host ELOC and CUL2; this interaction allows NS1 to form an active E3 ligase with ELOC and CUL2. Interacts with host IRF3; this interaction leads to the disrupted association of IRF3 with CREBBP and thus reduced binding of IRF3 to the IFN-beta promoter. Interacts with host MAVS; this interaction prevents MAVS binding to RIGI and inhibits signaling pathway leading to interferon production. Interacts with host MAP1B/microtubule-associated protein 1B. Interacts with host TRIM25 (via SPRY domain); this interaction suppresses RIGI ubiquitination and results in decreased interaction between RIGI and MAVS.

Its subcellular location is the host cytoplasm. It localises to the host mitochondrion. It is found in the host nucleus. Functionally, plays a major role in antagonizing the type I IFN-mediated antiviral response by degrading or inhibiting multiple cellular factors required for either IFN induction or response pathways. Acts cooperatively with NS2 to repress activation and nuclear translocation of host IFN-regulatory factor IRF3. Also disrupts the association of IRF3 with CREBBP. Interacts with host mitochondrial-associated membrane (MAM) MAVS and prevents the interaction with RIGI. Interacts with TRIM25 to suppress TRIM25-mediated RIGI ubiquitination and thereby RIGI-MAVS interaction. Together with NS2, participates in the proteasomal degradation of host STAT2, IRF3, IRF7, TBK1 and RIGI through a NS-degradasome involving CUL2 and Elongin-C. The degradasome requires an intact mitochondrial MAVS. Decreases the levels of host TRAF3 and IKBKE/IKK-epsilon. As functions other than disruptions of the type I IFN-mediated antiviral signaling pathways, induces host SOCS1 and SOCS3 expression. Suppresses premature apoptosis by an NF-kappa-B-dependent, interferon-independent mechanism and thus facilitates virus growth. Additionally, NS1 may serve some inhibitory role in viral transcription and RNA replication. Suppresses proliferation and activation of host CD103+ CD8+ cytotoxic T-lymphocytes and Th17 helper T-lymphocytes. The polypeptide is Non-structural protein 1 (1C) (Homo sapiens (Human)).